Reading from the N-terminus, the 163-residue chain is uncharacterized protein (163 aa).

This is an uncharacterized protein from Mycoplasma pneumoniae (strain ATCC 29342 / M129 / Subtype 1) (Mycoplasmoides pneumoniae).